We begin with the raw amino-acid sequence, 219 residues long: Ras-related protein Rab-3D (219 aa).

Alanine 2 carries the N-acetylalanine modification. Residue 29–37 participates in GDP binding; the sequence is GNSSVGKTS. GTP contacts are provided by serine 31, serine 32, valine 33, glycine 34, lysine 35, threonine 36, serine 37, proline 49, and serine 53. A Mg(2+)-binding site is contributed by threonine 36. The Switch 1 signature appears at 49–58; the sequence is PAFVSTVGID. Mg(2+) is bound by residues threonine 54 and aspartate 77. Residue glycine 80 participates in GTP binding. The Switch 2 signature appears at 80–96; the sequence is GQERYRTITTAYYRGAM. Threonine 86 carries the post-translational modification Phosphothreonine; by LRRK2. Residues asparagine 135, lysine 136, aspartate 138, alanine 166, and lysine 167 each contribute to the GTP site. Residues 135-138 and 165-167 contribute to the GDP site; these read NKCD and SAK. The residue at position 190 (serine 190) is a Phosphoserine. The segment covering 190–199 has biased composition (low complexity); that stretch reads SLEPSSSSGS. The interval 190–219 is disordered; it reads SLEPSSSSGSNGKGPAVGDAPAPQPSSCSC. S-geranylgeranyl cysteine attachment occurs at residues cysteine 217 and cysteine 219. Cysteine 219 carries the cysteine methyl ester modification.

This sequence belongs to the small GTPase superfamily. Rab family. Interacts with RIMS1, RIMS2, RPH3A, RPH3AL and RAB3IP. The GTP-bound form interacts with REP15. Interacts with CHM and CHML; phosphorylation at Thr-86 disrupts these interactions. Interacts with MADD (via uDENN domain); the GTP-bound form is preferred for interaction. Mg(2+) is required as a cofactor. In terms of processing, phosphorylation of Thr-86 in the switch II region by LRRK2 prevents the association of RAB regulatory proteins, including CHM and CHML. As to expression, highly expressed in granulocytes of peripheral blood. Constitutively expressed at low levels in all hematopoietic cell lines investigated.

It is found in the cell membrane. It catalyses the reaction GTP + H2O = GDP + phosphate + H(+). Its activity is regulated as follows. Regulated by guanine nucleotide exchange factors (GEFs) which promote the exchange of bound GDP for free GTP. Regulated by GTPase activating proteins (GAPs) which increase the GTP hydrolysis activity. Inhibited by GDP dissociation inhibitors (GDIs) which prevent Rab-GDP dissociation. The small GTPases Rab are key regulators of intracellular membrane trafficking, from the formation of transport vesicles to their fusion with membranes. Rabs cycle between an inactive GDP-bound form and an active GTP-bound form that is able to recruit to membranes different sets of downstream effectors directly responsible for vesicle formation, movement, tethering and fusion. RAB3D may be involved in the insulin-induced exocytosis of GLUT4-containing vesicles in adipocytes. This is Ras-related protein Rab-3D from Homo sapiens (Human).